We begin with the raw amino-acid sequence, 468 residues long: UDP-N-acetylmuramate--L-alanine ligase (468 aa).

Residue 114–120 coordinates ATP; that stretch reads GTHGKTT.

Belongs to the MurCDEF family.

The protein resides in the cytoplasm. The enzyme catalyses UDP-N-acetyl-alpha-D-muramate + L-alanine + ATP = UDP-N-acetyl-alpha-D-muramoyl-L-alanine + ADP + phosphate + H(+). Its pathway is cell wall biogenesis; peptidoglycan biosynthesis. Cell wall formation. This Methylocella silvestris (strain DSM 15510 / CIP 108128 / LMG 27833 / NCIMB 13906 / BL2) protein is UDP-N-acetylmuramate--L-alanine ligase.